Reading from the N-terminus, the 334-residue chain is MALRWGIVSVGLISSDFTAVLQTLPRSEHQVVAVAARDLSRAKEFAQKHDIPKAYGSYEELAKDPSVEVAYIGTQHPQHKAAVMLCLAAGKAVLCEKPTGVNAAEVREMVAEARSRALFLMEAIWTRFFPASEALRSVLAQGTLGDLRVARAEFGKNLIHVPRAVDRAQAGGALLDIGIYCVQFTSMVFGGQKPEKISVVGRRHETGVDDTVTVLLQYPGEVHGSFTCSITVQLSNTASVSGTKGMVQLLNPCWCPTELVVKGEHKEFPLPPVPKDCNFDNGAGMSYEAKHVWECLRKGMKESPVIPLSESELLADILEEVRKAIGVTFPQDKR.

This sequence belongs to the Gfo/Idh/MocA family. As to quaternary structure, homodimer. In terms of tissue distribution, small intestine.

The enzyme catalyses (1R,2R)-1,2-dihydrobenzene-1,2-diol + NADP(+) = catechol + NADPH + H(+). It carries out the reaction D-xylose + NADP(+) = D-xylono-1,5-lactone + NADPH + H(+). The chain is Trans-1,2-dihydrobenzene-1,2-diol dehydrogenase (DHDH) from Homo sapiens (Human).